Consider the following 211-residue polypeptide: BAG family molecular chaperone regulator 2 (211 aa).

N-acetylalanine is present on A2. Phosphoserine occurs at positions 20, 31, and 73. Residues 20 to 61 (SMADRSSRLLESLDQLELRVEALREAATAVEQEKEILLEMIH) are a coiled coil. A BAG domain is found at 109–189 (SLKHATRIID…NIENSDKAIK (81 aa)).

As to quaternary structure, binds to the ATPase domain of HSP/HSC70 chaperones. May interact with NWD1. Interacts with HSPA1A (via NBD), HSPA1B (via NBD) and HSPA8. May interact with DNJC9; the interaction seems to be histone-dependent.

Co-chaperone for HSP70 and HSC70 chaperone proteins. Acts as a nucleotide-exchange factor (NEF) promoting the release of ADP from the HSP70 and HSC70 proteins thereby triggering client/substrate protein release. The chain is BAG family molecular chaperone regulator 2 (BAG2) from Homo sapiens (Human).